The chain runs to 218 residues: Ribose-5-phosphate isomerase A (218 aa).

Substrate-binding positions include 28–31 (TGST), 81–84 (DGAD), and 94–97 (KGGG). The active-site Proton acceptor is the Glu-103. Position 121 (Lys-121) interacts with substrate.

Belongs to the ribose 5-phosphate isomerase family. In terms of assembly, homodimer.

The enzyme catalyses aldehydo-D-ribose 5-phosphate = D-ribulose 5-phosphate. The protein operates within carbohydrate degradation; pentose phosphate pathway; D-ribose 5-phosphate from D-ribulose 5-phosphate (non-oxidative stage): step 1/1. Functionally, catalyzes the reversible conversion of ribose-5-phosphate to ribulose 5-phosphate. The polypeptide is Ribose-5-phosphate isomerase A (Aliivibrio salmonicida (strain LFI1238) (Vibrio salmonicida (strain LFI1238))).